The sequence spans 92 residues: Small ribosomal subunit protein bS18A (92 aa).

This sequence belongs to the bacterial ribosomal protein bS18 family. As to quaternary structure, part of the 30S ribosomal subunit. Forms a tight heterodimer with protein bS6.

Functionally, binds as a heterodimer with protein bS6 to the central domain of the 16S rRNA, where it helps stabilize the platform of the 30S subunit. The chain is Small ribosomal subunit protein bS18A from Cupriavidus pinatubonensis (strain JMP 134 / LMG 1197) (Cupriavidus necator (strain JMP 134)).